A 314-amino-acid chain; its full sequence is Olfactory receptor 1 (314 aa).

The Extracellular segment spans residues 1–29 (MTERNQTVISQFLLLGLPIPPEHQHVFYA). Residue Asn5 is glycosylated (N-linked (GlcNAc...) asparagine). Residues 30-50 (LFLSMYLTTVLGNLIIIILIL) traverse the membrane as a helical segment. The Cytoplasmic segment spans residues 51 to 59 (LDSHLHTPM). A helical membrane pass occupies residues 60-81 (YLFLSNLSFSDLCFSSVTMPKL). Residues 82 to 97 (LQNMQSQVPSIPYAGC) are Extracellular-facing. Cys97 and Cys179 are joined by a disulfide. Residues 98–118 (LSQIYFFLFFGDLGNFLLVAM) traverse the membrane as a helical segment. At 119–143 (AYDRYVAICFPLHYMSIMSPKLCVS) the chain is on the cytoplasmic side. Residues 144–164 (LVVLSWVLTTFHAMLHTLLMA) form a helical membrane-spanning segment. Residues 165–196 (RLSFCEDNVIPHFFCDMSALLKLACSDTRVNE) lie on the Extracellular side of the membrane. The helical transmembrane segment at 197 to 217 (VVIFIVVSLFLVLPFALIIMS) threads the bilayer. At 218-240 (YVRIVSSILKVPSSQGIYKAFST) the chain is on the cytoplasmic side. Residues 241-261 (CGSHLSVVSLFYGTVIGLYLC) traverse the membrane as a helical segment. The Extracellular portion of the chain corresponds to 262-271 (PSSNNSTVKE). N-linked (GlcNAc...) asparagine glycosylation is found at Asn265 and Asn266. A helical transmembrane segment spans residues 272–292 (TVMSLMYTVVTPMLNPFIYSL). Residues 293 to 314 (RNRDIKGAMERIFCKRKIQLNL) lie on the Cytoplasmic side of the membrane.

Belongs to the G-protein coupled receptor 1 family. In terms of tissue distribution, olfactory epithelium.

The protein resides in the cell membrane. Functionally, odorant receptor. Activated by a lily-derived aldehyde as well as other odorants. May signal through an inositol 1,4,5-trisphosphate (IP3) second messenger system. The polypeptide is Olfactory receptor 1 (Rattus norvegicus (Rat)).